A 618-amino-acid chain; its full sequence is Rho guanine nucleotide exchange factor 25 (618 aa).

2 disordered regions span residues 26–63 and 169–193; these read CAVP…REPE and GPGD…EEQK. One can recognise a DH domain in the interval 199–375; it reads RSMFVLGELV…CFVPKRCNDM (177 aa). An important for binding to Rho GTPases region spans residues 317-338; that stretch reads LGHRLQLNDLLIKPVQRIMKYQ. One can recognise a PH domain in the interval 387–505; that stretch reads KLTAQGKLLG…WIKQVAQILE (119 aa). A sufficient to bind activated GNAQ region spans residues 506-532; sequence SQRDFLNALQSPIEYQRRESQTNSLGR. Disordered regions lie at residues 521–556 and 584–604; these read QRRE…SMHT and ALSD…VNTP. The segment covering 584–593 has biased composition (polar residues); it reads ALSDTPQTPH.

Interacts with activated GNAQ and GNA11. Interacts (via the DH domain) with POPDC1 (via the C-terminus cytoplasmic tail). Interacts with RHOA, CDC42 and RAC1. As to expression, highly expressed in excitable tissues, such as brain, heart and muscle. Elevated expression in hippocampus and cerebellum.

Its subcellular location is the cytoplasm. The protein resides in the myofibril. It localises to the sarcomere. It is found in the cell membrane. May play a role in actin cytoskeleton reorganization in different tissues since its activation induces formation of actin stress fibers. It works as a guanine nucleotide exchange factor for Rho family of small GTPases. Links specifically G alpha q/11-coupled receptors to RHOA activation. May be an important regulator of processes involved in axon and dendrite formation. In neurons seems to be an exchange factor primarily for RAC1. Involved in skeletal myogenesis. The protein is Rho guanine nucleotide exchange factor 25 (Arhgef25) of Mus musculus (Mouse).